The primary structure comprises 248 residues: 2,3-bisphosphoglycerate-dependent phosphoglycerate mutase (248 aa).

Residues 8-15 (RHGESLWN), 21-22 (TG), arginine 60, 87-90 (ERHY), lysine 98, 114-115 (RR), and 183-184 (GN) each bind substrate. Histidine 9 (tele-phosphohistidine intermediate) is an active-site residue. Glutamate 87 (proton donor/acceptor) is an active-site residue.

The protein belongs to the phosphoglycerate mutase family. BPG-dependent PGAM subfamily.

It catalyses the reaction (2R)-2-phosphoglycerate = (2R)-3-phosphoglycerate. The protein operates within carbohydrate degradation; glycolysis; pyruvate from D-glyceraldehyde 3-phosphate: step 3/5. In terms of biological role, catalyzes the interconversion of 2-phosphoglycerate and 3-phosphoglycerate. The protein is 2,3-bisphosphoglycerate-dependent phosphoglycerate mutase of Methanospirillum hungatei JF-1 (strain ATCC 27890 / DSM 864 / NBRC 100397 / JF-1).